The following is a 510-amino-acid chain: RNA-splicing ligase RtcB homolog (510 aa).

Residues Asp-124, Cys-127, His-232, His-264, and His-358 each contribute to the Mn(2+) site. 231–235 (NHYAE) contributes to the GMP binding site. Residues 358-359 (HN), 407-410 (GGTM), Ser-414, 433-436 (HGAG), and Lys-509 each bind GMP. The GMP-histidine intermediate role is filled by His-433.

The protein belongs to the RtcB family. In terms of assembly, catalytic component of the tRNA-splicing ligase complex. It depends on Mn(2+) as a cofactor.

It carries out the reaction a 3'-end 3'-phospho-ribonucleotide-RNA + a 5'-end dephospho-ribonucleoside-RNA + GTP = a ribonucleotidyl-ribonucleotide-RNA + GMP + diphosphate. The catalysed reaction is a 3'-end 2',3'-cyclophospho-ribonucleotide-RNA + a 5'-end dephospho-ribonucleoside-RNA + GTP + H2O = a ribonucleotidyl-ribonucleotide-RNA + GMP + diphosphate + H(+). In terms of biological role, catalytic subunit of the tRNA-splicing ligase complex that acts by directly joining spliced tRNA halves to mature-sized tRNAs by incorporating the precursor-derived splice junction phosphate into the mature tRNA as a canonical 3',5'-phosphodiester. May act as an RNA ligase with broad substrate specificity, and may function toward other RNAs. The sequence is that of RNA-splicing ligase RtcB homolog from Trichoplax adhaerens (Trichoplax reptans).